The sequence spans 375 residues: Nucleosome assembly protein 1-like 4 (375 aa).

Positions 1–28 (MAENSLSDGGPADSVEAAKNASNTEKLT) are disordered. Alanine 2 bears the N-acetylalanine mark. 3 positions are modified to phosphoserine: serine 5, serine 7, and serine 49. Threonine 51 carries the post-translational modification Phosphothreonine. A phosphoserine mark is found at serine 53 and serine 54. Threonine 58 is modified (phosphothreonine). The residue at position 105 (lysine 105) is an N6-acetyllysine. Serine 125 bears the Phosphoserine mark. The residue at position 146 (lysine 146) is an N6-acetyllysine. Positions 265 to 271 (IKKKQKH) match the Nuclear localization signal motif. The residue at position 304 (serine 304) is a Phosphoserine. Positions 339–375 (AIEDDDNFEEGEEGEEEELEGDEEGEDEDDADVNPKV) are disordered.

This sequence belongs to the nucleosome assembly protein (NAP) family. As to quaternary structure, interacts with core (H2A, H2B, H3, H4) and linker (H1) histones. Polyglutamylated and polyglycylated. These 2 modifications occur exclusively on glutamate residues and result in either polyglutamate or polyglycine chains on the gamma-carboxyl group. Both modifications can coexist on the same protein on adjacent residues, and lowering polyglycylation levels increases polyglutamylation, and reciprocally. Polyglutamylated by TTLL4. In terms of processing, phosphorylated at the G0/G1 boundary but it is not phosphorylated in S-phase. Phosphorylated protein remains in the cytoplasm in a complex with histones during the G0/G1 transition, whereas dephosphorylation triggers its transport into the nucleus at the G1/S-boundary.

Its subcellular location is the nucleus. It localises to the cytoplasm. In terms of biological role, acts as a histone chaperone in nucleosome assembly. In condensing spermatids, mediates the loading of the heterodimer composed of histones H2AB1 and H2BC1/TH2B onto the nucleosomes, thereby promoting the replacement of histones to protamine in male germ cells. This chain is Nucleosome assembly protein 1-like 4 (Nap1l4), found in Mus musculus (Mouse).